The following is a 293-amino-acid chain: EID1-like F-box protein 1 (293 aa).

The F-box domain maps to 16-68; sequence QCTKGHLNEDVLLLVFQHLNWNPKLVATLSCVCRWFDDFAKRVLWKEFCKTRA. Residues 245-293 form a disordered region; that stretch reads AIPSEDNNHTEKKQDNGFPRENVLKRRNSLLGGSENGPPPQKRLTNPNQ. Basic and acidic residues predominate over residues 250 to 259; the sequence is DNNHTEKKQD.

In Arabidopsis thaliana (Mouse-ear cress), this protein is EID1-like F-box protein 1 (EDL1).